The chain runs to 324 residues: Testisin (324 aa).

The N-terminal stretch at 1-21 is a signal peptide; sequence MGARGKTLVPLLVVVATAAMA. A propeptide spanning residues 22–54 is cleaved from the precursor; that stretch reads LQSTYLQVDPEKPELQEPDLLSGPCGHRTIPSR. Cystine bridges form between cysteine 46–cysteine 167 and cysteine 80–cysteine 96. In terms of domain architecture, Peptidase S1 spans 55 to 296; that stretch reads IVGGDDAELG…HYNWIQSTMI (242 aa). Residues histidine 95 and aspartate 147 each act as charge relay system in the active site. Asparagine 170, asparagine 177, and asparagine 210 each carry an N-linked (GlcNAc...) asparagine glycan. 3 disulfides stabilise this stretch: cysteine 181–cysteine 254, cysteine 214–cysteine 233, and cysteine 244–cysteine 272. Serine 248 (charge relay system) is an active-site residue. The N-linked (GlcNAc...) asparagine glycan is linked to asparagine 283. Asparagine 298 carries the GPI-anchor amidated asparagine lipid modification. Positions 299-324 are cleaved as a propeptide — removed in mature form; sequence GLLRPDPVPLLLFLTLAWASSLLRPA.

The protein belongs to the peptidase S1 family. In terms of tissue distribution, testis.

The protein localises to the cell membrane. In terms of biological role, could regulate proteolytic events associated with testicular germ cell maturation. The protein is Testisin (Prss21) of Mus musculus (Mouse).